The chain runs to 277 residues: Uridine-cytidine kinase 1 (277 aa).

Residues 1–30 (MASAGGEDCESPAPEADRPHQRPFLIGVSG) are disordered. 30–38 (GGTASGKST) provides a ligand contact to ATP. Asp65 is a catalytic residue. Substrate contacts are provided by Asp87, Tyr115, His120, Arg169, Arg178, and Gln186. ATP is bound at residue Asp215. Positions 247-277 (SYKRTFSEPGDHPGMLTSGKRSHLESSSRPH) are disordered. Thr251 is modified (phosphothreonine). Position 253 is a phosphoserine (Ser253). The segment covering 268-277 (SHLESSSRPH) has biased composition (basic and acidic residues).

It belongs to the uridine kinase family. As to expression, ubiquitous.

It carries out the reaction uridine + ATP = UMP + ADP + H(+). It catalyses the reaction cytidine + ATP = CMP + ADP + H(+). Its pathway is pyrimidine metabolism; CTP biosynthesis via salvage pathway; CTP from cytidine: step 1/3. It functions in the pathway pyrimidine metabolism; UMP biosynthesis via salvage pathway; UMP from uridine: step 1/1. Functionally, phosphorylates uridine and cytidine to uridine monophosphate and cytidine monophosphate. Does not phosphorylate deoxyribonucleosides or purine ribonucleosides. Can use ATP or GTP as a phosphate donor. Can also phosphorylate cytidine and uridine nucleoside analogs such as 6-azauridine, 5-fluorouridine, 4-thiouridine, 5-bromouridine, N(4)-acetylcytidine, N(4)-benzoylcytidine, 5-fluorocytidine, 2-thiocytidine, 5-methylcytidine, and N(4)-anisoylcytidine. This is Uridine-cytidine kinase 1 (UCK1) from Homo sapiens (Human).